Here is a 172-residue protein sequence, read N- to C-terminus: ATP synthase subunit b (172 aa).

Residues 27–47 (LAIVIFGLYKFLPPFVGGILE) form a helical membrane-spanning segment.

This sequence belongs to the ATPase B chain family. F-type ATPases have 2 components, F(1) - the catalytic core - and F(0) - the membrane proton channel. F(1) has five subunits: alpha(3), beta(3), gamma(1), delta(1), epsilon(1). F(0) has four main subunits: a(1), b(1), b'(1) and c(10-14). The alpha and beta chains form an alternating ring which encloses part of the gamma chain. F(1) is attached to F(0) by a central stalk formed by the gamma and epsilon chains, while a peripheral stalk is formed by the delta, b and b' chains.

Its subcellular location is the cellular thylakoid membrane. In terms of biological role, f(1)F(0) ATP synthase produces ATP from ADP in the presence of a proton or sodium gradient. F-type ATPases consist of two structural domains, F(1) containing the extramembraneous catalytic core and F(0) containing the membrane proton channel, linked together by a central stalk and a peripheral stalk. During catalysis, ATP synthesis in the catalytic domain of F(1) is coupled via a rotary mechanism of the central stalk subunits to proton translocation. Its function is as follows. Component of the F(0) channel, it forms part of the peripheral stalk, linking F(1) to F(0). This Prochlorococcus marinus (strain MIT 9303) protein is ATP synthase subunit b.